Here is a 324-residue protein sequence, read N- to C-terminus: tRNA dimethylallyltransferase (324 aa).

17–24 (GPTASGKT) contacts ATP. 19 to 24 (TASGKT) provides a ligand contact to substrate. Interaction with substrate tRNA stretches follow at residues 42 to 45 (DSAL), 166 to 170 (QRIQR), 251 to 256 (RCVGYR), and 284 to 291 (KRQITWLR).

This sequence belongs to the IPP transferase family. As to quaternary structure, monomer. The cofactor is Mg(2+).

The catalysed reaction is adenosine(37) in tRNA + dimethylallyl diphosphate = N(6)-dimethylallyladenosine(37) in tRNA + diphosphate. Catalyzes the transfer of a dimethylallyl group onto the adenine at position 37 in tRNAs that read codons beginning with uridine, leading to the formation of N6-(dimethylallyl)adenosine (i(6)A). The protein is tRNA dimethylallyltransferase of Burkholderia ambifaria (strain MC40-6).